Reading from the N-terminus, the 168-residue chain is Disulfide bond formation protein B (168 aa).

Residues 1–6 are Cytoplasmic-facing; that stretch reads MTSRWI. A helical transmembrane segment spans residues 7-23; the sequence is FGLVFLVCAGLLAVAFY. Residues 24–41 lie on the Periplasmic side of the membrane; that stretch reads MEHVMGLEPCPLCWLQRF. A disulfide bridge connects residues Cys-33 and Cys-36. Residues 42 to 58 form a helical membrane-spanning segment; that stretch reads GFMGAGLVSLLAFLHGP. The Cytoplasmic segment spans residues 59 to 65; sequence RGFGNRV. Residues 66–82 traverse the membrane as a helical segment; the sequence is YGLLLIVAAGAGLAVAG. The Periplasmic portion of the chain corresponds to 83 to 139; sequence RQLWLQSLPADQVPACGPSVDYMLEVLPWFEVLQTALKGTGDCAEVVWRFLGLSIPG. Cysteines 98 and 125 form a disulfide. Residues 140–158 form a helical membrane-spanning segment; it reads WTAVFFSLLIVLGLFVMLR. At 159 to 168 the chain is on the cytoplasmic side; it reads RYSPRDWLQS.

The protein belongs to the DsbB family.

Its subcellular location is the cell inner membrane. Its function is as follows. Required for disulfide bond formation in some periplasmic proteins. Acts by oxidizing the DsbA protein. The polypeptide is Disulfide bond formation protein B (Marinobacter nauticus (strain ATCC 700491 / DSM 11845 / VT8) (Marinobacter aquaeolei)).